An 895-amino-acid polypeptide reads, in one-letter code: DNA mismatch repair protein MutS (895 aa).

Residue 607–614 coordinates ATP; that stretch reads GPNMSGKS.

Belongs to the DNA mismatch repair MutS family.

This protein is involved in the repair of mismatches in DNA. It is possible that it carries out the mismatch recognition step. This protein has a weak ATPase activity. The protein is DNA mismatch repair protein MutS of Bacillus cytotoxicus (strain DSM 22905 / CIP 110041 / 391-98 / NVH 391-98).